The chain runs to 93 residues: Small ribosomal subunit protein uS19 (93 aa).

Belongs to the universal ribosomal protein uS19 family.

In terms of biological role, protein S19 forms a complex with S13 that binds strongly to the 16S ribosomal RNA. The sequence is that of Small ribosomal subunit protein uS19 from Desulfitobacterium hafniense (strain DSM 10664 / DCB-2).